We begin with the raw amino-acid sequence, 163 residues long: PTS system fructose-specific EIIB component (163 aa).

In terms of domain architecture, PTS EIIB type-4 spans 1-163; that stretch reads MMNIVLARID…FVQILRNVTK (163 aa). The active-site Pros-phosphohistidine intermediate is His15. His15 is modified (phosphohistidine; by EIIA).

Its subcellular location is the cytoplasm. It carries out the reaction D-fructose(out) + N(pros)-phospho-L-histidyl-[protein] = D-fructose 1-phosphate(in) + L-histidyl-[protein]. In terms of biological role, the phosphoenolpyruvate-dependent sugar phosphotransferase system (sugar PTS), a major carbohydrate active -transport system, catalyzes the phosphorylation of incoming sugar substrates concomitantly with their translocation across the cell membrane. The enzyme II LevDE PTS system is involved in fructose transport. Its function is as follows. LevD and LevE act as negative regulators of the levanase operon. They may be involved in a PTS-mediated phosphorylation of a regulator. The polypeptide is PTS system fructose-specific EIIB component (Bacillus subtilis (strain 168)).